We begin with the raw amino-acid sequence, 76 residues long: Bacteriocin uberolysin (76 aa).

A propeptide spanning residues 1-6 is cleaved from the precursor; it reads MDILLE. Residues 7-76 constitute a cross-link (cyclopeptide (Leu-Trp)); sequence LAGYTGIASG…RNLKAQAVIW (70 aa).

It belongs to the bacteriocin class V family.

It is found in the secreted. Its function is as follows. Cyclopeptide antibiotic with bacteriolytic activity against most streptococci (except S.rattus and S.mutans), Listeria spp., enterococci and staphylococci. This is Bacteriocin uberolysin (ublA) from Streptococcus uberis.